Here is a 460-residue protein sequence, read N- to C-terminus: Bifunctional protein GlmU (460 aa).

The tract at residues 1–229 is pyrophosphorylase; the sequence is MSKLNIVVLA…VWETTGVNSK (229 aa). UDP-N-acetyl-alpha-D-glucosamine-binding positions include 9–12, Lys-23, Gln-74, 79–80, 101–103, Gly-138, Glu-154, Asn-169, and Asn-227; these read LAAG, GT, and YGD. Residue Asp-103 participates in Mg(2+) binding. Asn-227 contributes to the Mg(2+) binding site. The segment at 230–250 is linker; it reads VQLAGLERIYQTAQANKLLEQ. Residues 251–460 form an N-acetyltransferase region; that stretch reads GVALADPARI…RPVKKPKPKN (210 aa). UDP-N-acetyl-alpha-D-glucosamine contacts are provided by Arg-333 and Lys-351. His-363 serves as the catalytic Proton acceptor. UDP-N-acetyl-alpha-D-glucosamine is bound by residues Tyr-366 and Asn-377. Acetyl-CoA-binding positions include Ala-380, 386 to 387, Ser-405, Ala-423, and Arg-440; that span reads NY.

It in the N-terminal section; belongs to the N-acetylglucosamine-1-phosphate uridyltransferase family. This sequence in the C-terminal section; belongs to the transferase hexapeptide repeat family. Homotrimer. Mg(2+) serves as cofactor.

It localises to the cytoplasm. It catalyses the reaction alpha-D-glucosamine 1-phosphate + acetyl-CoA = N-acetyl-alpha-D-glucosamine 1-phosphate + CoA + H(+). It carries out the reaction N-acetyl-alpha-D-glucosamine 1-phosphate + UTP + H(+) = UDP-N-acetyl-alpha-D-glucosamine + diphosphate. It functions in the pathway nucleotide-sugar biosynthesis; UDP-N-acetyl-alpha-D-glucosamine biosynthesis; N-acetyl-alpha-D-glucosamine 1-phosphate from alpha-D-glucosamine 6-phosphate (route II): step 2/2. It participates in nucleotide-sugar biosynthesis; UDP-N-acetyl-alpha-D-glucosamine biosynthesis; UDP-N-acetyl-alpha-D-glucosamine from N-acetyl-alpha-D-glucosamine 1-phosphate: step 1/1. Its pathway is bacterial outer membrane biogenesis; LPS lipid A biosynthesis. Functionally, catalyzes the last two sequential reactions in the de novo biosynthetic pathway for UDP-N-acetylglucosamine (UDP-GlcNAc). The C-terminal domain catalyzes the transfer of acetyl group from acetyl coenzyme A to glucosamine-1-phosphate (GlcN-1-P) to produce N-acetylglucosamine-1-phosphate (GlcNAc-1-P), which is converted into UDP-GlcNAc by the transfer of uridine 5-monophosphate (from uridine 5-triphosphate), a reaction catalyzed by the N-terminal domain. In Nitrosospira multiformis (strain ATCC 25196 / NCIMB 11849 / C 71), this protein is Bifunctional protein GlmU.